The following is a 396-amino-acid chain: CCA-adding enzyme (396 aa).

G27 and R30 together coordinate ATP. CTP is bound by residues G27 and R30. Mg(2+)-binding residues include D40 and D42. ATP-binding residues include R111, D154, R157, R160, and R163. 5 residues coordinate CTP: R111, D154, R157, R160, and R163.

This sequence belongs to the tRNA nucleotidyltransferase/poly(A) polymerase family. Bacterial CCA-adding enzyme type 3 subfamily. Homodimer. The cofactor is Mg(2+).

The catalysed reaction is a tRNA precursor + 2 CTP + ATP = a tRNA with a 3' CCA end + 3 diphosphate. It catalyses the reaction a tRNA with a 3' CCA end + 2 CTP + ATP = a tRNA with a 3' CCACCA end + 3 diphosphate. Its function is as follows. Catalyzes the addition and repair of the essential 3'-terminal CCA sequence in tRNAs without using a nucleic acid template. Adds these three nucleotides in the order of C, C, and A to the tRNA nucleotide-73, using CTP and ATP as substrates and producing inorganic pyrophosphate. tRNA 3'-terminal CCA addition is required both for tRNA processing and repair. Also involved in tRNA surveillance by mediating tandem CCA addition to generate a CCACCA at the 3' terminus of unstable tRNAs. While stable tRNAs receive only 3'-terminal CCA, unstable tRNAs are marked with CCACCA and rapidly degraded. This is CCA-adding enzyme from Pediococcus pentosaceus (strain ATCC 25745 / CCUG 21536 / LMG 10740 / 183-1w).